The following is a 449-amino-acid chain: Probable glycine dehydrogenase (decarboxylating) subunit 1 (449 aa).

The protein belongs to the GcvP family. N-terminal subunit subfamily. The glycine cleavage system is composed of four proteins: P, T, L and H. In this organism, the P 'protein' is a heterodimer of two subunits.

The enzyme catalyses N(6)-[(R)-lipoyl]-L-lysyl-[glycine-cleavage complex H protein] + glycine + H(+) = N(6)-[(R)-S(8)-aminomethyldihydrolipoyl]-L-lysyl-[glycine-cleavage complex H protein] + CO2. The glycine cleavage system catalyzes the degradation of glycine. The P protein binds the alpha-amino group of glycine through its pyridoxal phosphate cofactor; CO(2) is released and the remaining methylamine moiety is then transferred to the lipoamide cofactor of the H protein. In Rhodospirillum centenum (strain ATCC 51521 / SW), this protein is Probable glycine dehydrogenase (decarboxylating) subunit 1.